Reading from the N-terminus, the 662-residue chain is Acetyl-coenzyme A synthetase (662 aa).

CoA contacts are provided by residues 197–200 (RKGK) and Thr-317. Residues 393-395 (GEP), 417-422 (DTWWQT), Asp-510, and Arg-525 each bind ATP. Ser-533 is a binding site for CoA. Arg-536 serves as a coordination point for ATP. Residues His-549 and Val-552 each coordinate Mg(2+). At Lys-623 the chain carries N6-acetyllysine.

This sequence belongs to the ATP-dependent AMP-binding enzyme family. Requires Mg(2+) as cofactor. Acetylated. Deacetylation by the SIR2-homolog deacetylase activates the enzyme.

The catalysed reaction is acetate + ATP + CoA = acetyl-CoA + AMP + diphosphate. In terms of biological role, catalyzes the conversion of acetate into acetyl-CoA (AcCoA), an essential intermediate at the junction of anabolic and catabolic pathways. AcsA undergoes a two-step reaction. In the first half reaction, AcsA combines acetate with ATP to form acetyl-adenylate (AcAMP) intermediate. In the second half reaction, it can then transfer the acetyl group from AcAMP to the sulfhydryl group of CoA, forming the product AcCoA. The protein is Acetyl-coenzyme A synthetase of Helicobacter pylori (strain G27).